We begin with the raw amino-acid sequence, 297 residues long: Tyrosine recombinase XerD (297 aa).

The 86-residue stretch at 1-86 folds into the Core-binding (CB) domain; the sequence is MNDLIEDFLH…SLRSFFHYLM (86 aa). One can recognise a Tyr recombinase domain in the interval 107-291; that stretch reads GLPKVLNLDD…TKLRLKDVYK (185 aa). Active-site residues include R147, K171, H243, R246, and H269. The active-site O-(3'-phospho-DNA)-tyrosine intermediate is Y278.

It belongs to the 'phage' integrase family. XerD subfamily. As to quaternary structure, forms a cyclic heterotetrameric complex composed of two molecules of XerC and two molecules of XerD.

The protein localises to the cytoplasm. Its function is as follows. Site-specific tyrosine recombinase, which acts by catalyzing the cutting and rejoining of the recombining DNA molecules. The XerC-XerD complex is essential to convert dimers of the bacterial chromosome into monomers to permit their segregation at cell division. It also contributes to the segregational stability of plasmids. This chain is Tyrosine recombinase XerD, found in Listeria monocytogenes serotype 4b (strain F2365).